The following is a 122-amino-acid chain: Small ribosomal subunit protein uS13 (122 aa).

The disordered stretch occupies residues 99–122 (RGQRTHTNARTRKGPAKAIAGKKK).

Belongs to the universal ribosomal protein uS13 family. Part of the 30S ribosomal subunit. Forms a loose heterodimer with protein S19. Forms two bridges to the 50S subunit in the 70S ribosome.

Functionally, located at the top of the head of the 30S subunit, it contacts several helices of the 16S rRNA. In the 70S ribosome it contacts the 23S rRNA (bridge B1a) and protein L5 of the 50S subunit (bridge B1b), connecting the 2 subunits; these bridges are implicated in subunit movement. Contacts the tRNAs in the A and P-sites. This Rhodopseudomonas palustris (strain BisA53) protein is Small ribosomal subunit protein uS13.